The chain runs to 176 residues: ATP-dependent protease subunit HslV (176 aa).

Thr-2 is an active-site residue. Na(+) contacts are provided by Gly-157, Cys-160, and Thr-163.

The protein belongs to the peptidase T1B family. HslV subfamily. A double ring-shaped homohexamer of HslV is capped on each side by a ring-shaped HslU homohexamer. The assembly of the HslU/HslV complex is dependent on binding of ATP.

It localises to the cytoplasm. It catalyses the reaction ATP-dependent cleavage of peptide bonds with broad specificity.. With respect to regulation, allosterically activated by HslU binding. In terms of biological role, protease subunit of a proteasome-like degradation complex believed to be a general protein degrading machinery. This is ATP-dependent protease subunit HslV from Erwinia tasmaniensis (strain DSM 17950 / CFBP 7177 / CIP 109463 / NCPPB 4357 / Et1/99).